Reading from the N-terminus, the 394-residue chain is Protein TsgA homolog (394 aa).

12 helical membrane-spanning segments follow: residues 11–31 (WISY…GIVM), 51–71 (FLNA…EIIP), 76–96 (LVFG…GHNL), 101–121 (ISMF…TFLV), 134–154 (LLFT…AAAM), 162–182 (WYWV…LTLC), 206–226 (VGVL…LGFI), 246–266 (QLVS…SFIL), 274–294 (IVTV…STDN), 302–322 (ILAL…LGSL), 334–354 (FILT…GPIV), and 363–383 (LETA…LGFF).

This sequence belongs to the major facilitator superfamily. TsgA family.

Its subcellular location is the cell inner membrane. This Yersinia pestis bv. Antiqua (strain Antiqua) protein is Protein TsgA homolog.